A 188-amino-acid chain; its full sequence is Phosphoribosylglycinamide formyltransferase (188 aa).

N(1)-(5-phospho-beta-D-ribosyl)glycinamide is bound at residue 12 to 14 (GSN). (6R)-10-formyltetrahydrofolate contacts are provided by residues Lys-66, 91 to 94 (MRLI), and Asn-108. His-110 (proton donor) is an active-site residue.

Belongs to the GART family.

The enzyme catalyses N(1)-(5-phospho-beta-D-ribosyl)glycinamide + (6R)-10-formyltetrahydrofolate = N(2)-formyl-N(1)-(5-phospho-beta-D-ribosyl)glycinamide + (6S)-5,6,7,8-tetrahydrofolate + H(+). It functions in the pathway purine metabolism; IMP biosynthesis via de novo pathway; N(2)-formyl-N(1)-(5-phospho-D-ribosyl)glycinamide from N(1)-(5-phospho-D-ribosyl)glycinamide (10-formyl THF route): step 1/1. Catalyzes the transfer of a formyl group from 10-formyltetrahydrofolate to 5-phospho-ribosyl-glycinamide (GAR), producing 5-phospho-ribosyl-N-formylglycinamide (FGAR) and tetrahydrofolate. The chain is Phosphoribosylglycinamide formyltransferase from Staphylococcus aureus (strain MRSA252).